A 264-amino-acid polypeptide reads, in one-letter code: MKPTTISLLQKYKQEKKRFATITAYDYSFAKLFADEGLNVMLVGDSLGMTVQGHDSTLPVTVADIAYHTAAVRRGAPNCLLLADLPFMAYATPEQAFENAATVMRAGANMVKIEGGEWLVETVQMLTERAVPVCGHLGLTPQSVNIFGGYKVQGRGDEAGDQLLSDALALEAAGAQLLVLECVPVELAKRITEALAIPVIGIGAGNVTDGQILVMHDAFGITGGHIPKFAKNFLAETGDIRAAVRQYMAEVESGVYPGEEHSFH.

Mg(2+)-binding residues include Asp-45 and Asp-84. 3-methyl-2-oxobutanoate is bound by residues 45-46, Asp-84, and Lys-112; that span reads DS. Residue Glu-114 participates in Mg(2+) binding. The Proton acceptor role is filled by Glu-181.

Belongs to the PanB family. As to quaternary structure, homodecamer; pentamer of dimers. It depends on Mg(2+) as a cofactor.

Its subcellular location is the cytoplasm. The enzyme catalyses 3-methyl-2-oxobutanoate + (6R)-5,10-methylene-5,6,7,8-tetrahydrofolate + H2O = 2-dehydropantoate + (6S)-5,6,7,8-tetrahydrofolate. The protein operates within cofactor biosynthesis; (R)-pantothenate biosynthesis; (R)-pantoate from 3-methyl-2-oxobutanoate: step 1/2. Its function is as follows. Catalyzes the reversible reaction in which hydroxymethyl group from 5,10-methylenetetrahydrofolate is transferred onto alpha-ketoisovalerate to form ketopantoate. The polypeptide is 3-methyl-2-oxobutanoate hydroxymethyltransferase (Escherichia coli (strain K12 / MC4100 / BW2952)).